We begin with the raw amino-acid sequence, 301 residues long: Nodulation protein D 3 (301 aa).

The HTH lysR-type domain maps to 6 to 63 (LDLNLLVVLDALLTARNLTAAASSINLSQPAMSAAVARLRNYFNDELFTMSGRERVLT). A DNA-binding region (H-T-H motif) is located at residues 23 to 43 (LTAAASSINLSQPAMSAAVAR).

This sequence belongs to the LysR transcriptional regulatory family.

Its function is as follows. NodD regulates the expression of the nodABCFE genes which encode other nodulation proteins. NodD is also a negative regulator of its own expression. Binds flavonoids as inducers. The sequence is that of Nodulation protein D 3 (nodD3) from Mesorhizobium japonicum (strain LMG 29417 / CECT 9101 / MAFF 303099) (Mesorhizobium loti (strain MAFF 303099)).